The following is a 192-amino-acid chain: Ion-translocating oxidoreductase complex subunit A (192 aa).

6 helical membrane passes run 5–25 (ILLI…FLGL), 39–59 (IGMS…AYLI), 63–83 (ILTP…VIAV), 102–122 (LLGI…VALL), 134–154 (VIYG…FAAL), and 171–191 (SIAL…TGLV).

Belongs to the NqrDE/RnfAE family. In terms of assembly, the complex is composed of six subunits: RnfA, RnfB, RnfC, RnfD, RnfE and RnfG.

The protein localises to the cell inner membrane. Part of a membrane-bound complex that couples electron transfer with translocation of ions across the membrane. In Pasteurella multocida (strain Pm70), this protein is Ion-translocating oxidoreductase complex subunit A.